We begin with the raw amino-acid sequence, 551 residues long: Chitinase (551 aa).

The first 17 residues, 1–17, serve as a signal peptide directing secretion; that stretch reads MLYKLLNVLWLVAVSNA. Residues 1-149 are chitin binding domain (CBD); that stretch reads MLYKLLNVLW…NKPGRREDKI (149 aa). A GH18 domain is found at 148–548; it reads KIVAAYFVEW…NAINAQFKPK (401 aa). N-linked (GlcNAc...) asparagine; by host glycosylation occurs at N173. E305 acts as the Proton donor in catalysis. N-linked (GlcNAc...) asparagine; by host glycosylation occurs at N444. Residues 548–551 carry the Prevents secretion from ER motif; it reads KDEL.

The protein belongs to the glycosyl hydrolase 18 family. Chitinase class II subfamily. Interacts with host VCATH.

It is found in the host endoplasmic reticulum lumen. It carries out the reaction Random endo-hydrolysis of N-acetyl-beta-D-glucosaminide (1-&gt;4)-beta-linkages in chitin and chitodextrins.. Plays a role in host liquefaction to facilitate horizontal transmission of the virus by hydrolyzing beta-chitin and by regulating the cysteine protease VCATH. Localized in the host reticulum endoplasmic via its KDEL motif, interacts with and thus prevents VCATH secretion before host cell lysis occurs. The chain is Chitinase (CHIA) from Lepidoptera (butterflies and moths).